We begin with the raw amino-acid sequence, 146 residues long: MORN repeat-containing protein 4 (146 aa).

MORN repeat units lie at residues 16–38, 39–61, 62–84, and 85–107; these read YRGE…DGGT, YLGH…DGSR, YEGE…DNMT, and FEGE…DGSH.

Interacts with MYO3A. In terms of tissue distribution, retina.

The protein localises to the cytoplasm. It is found in the cell projection. It localises to the filopodium tip. Its subcellular location is the stereocilium. In terms of biological role, plays a role in promoting axonal degeneration following neuronal injury by toxic insult or trauma. This chain is MORN repeat-containing protein 4 (MORN4), found in Bos taurus (Bovine).